We begin with the raw amino-acid sequence, 192 residues long: Large ribosomal subunit protein uL5 (192 aa).

The protein belongs to the universal ribosomal protein uL5 family. As to quaternary structure, part of the 50S ribosomal subunit; contacts the 5S rRNA and probably tRNA. Forms a bridge to the 30S subunit in the 70S ribosome.

Its function is as follows. This is one of the proteins that bind and probably mediate the attachment of the 5S RNA into the large ribosomal subunit, where it forms part of the central protuberance. In the 70S ribosome it contacts protein S13 of the 30S subunit (bridge B1b), connecting the 2 subunits; this bridge is implicated in subunit movement. May contact the P site tRNA; the 5S rRNA and some of its associated proteins might help stabilize positioning of ribosome-bound tRNAs. This is Large ribosomal subunit protein uL5 from Aeropyrum pernix (strain ATCC 700893 / DSM 11879 / JCM 9820 / NBRC 100138 / K1).